Reading from the N-terminus, the 660-residue chain is Peroxisomal acyl-coenzyme A oxidase 1 (660 aa).

The residue at position 26 (S26) is a Phosphoserine. N6-succinyllysine is present on residues K89 and K90. Positions 139 and 178 each coordinate FAD. Position 216 is an N6-acetyllysine (K216). K241 is modified (N6-succinyllysine). N6-acetyllysine occurs at positions 255, 267, and 272. At K349 the chain carries N6-succinyllysine. E421 acts as the Proton acceptor in catalysis. 2 positions are modified to N6-acetyllysine; alternate: K437 and K446. An N6-succinyllysine; alternate mark is found at K437 and K446. K500 is subject to N6-acetyllysine. K512 is subject to N6-acetyllysine; alternate. K512 is modified (N6-succinyllysine; alternate). K542 carries the N6-succinyllysine modification. An N6-acetyllysine; alternate modification is found at K637. Residue K637 is modified to N6-succinyllysine; alternate. K643 carries the N6-succinyllysine modification. S649 carries the phosphoserine modification. K651 carries the post-translational modification N6-acetyllysine. An N6-succinyllysine modification is found at K654. A Microbody targeting signal motif is present at residues 658–660; it reads SKL.

This sequence belongs to the acyl-CoA oxidase family. As to quaternary structure, homodimer. Interacts with LONP2. The cofactor is FAD.

Its subcellular location is the peroxisome. The catalysed reaction is a 2,3-saturated acyl-CoA + O2 = a (2E)-enoyl-CoA + H2O2. The enzyme catalyses hexadecanoyl-CoA + O2 = (2E)-hexadecenoyl-CoA + H2O2. It catalyses the reaction dodecanoyl-CoA + O2 = (2E)-dodecenoyl-CoA + H2O2. It carries out the reaction octanoyl-CoA + O2 = (2E)-octenoyl-CoA + H2O2. The catalysed reaction is decanoyl-CoA + O2 = (2E)-decenoyl-CoA + H2O2. The enzyme catalyses tetradecanoyl-CoA + O2 = (2E)-tetradecenoyl-CoA + H2O2. It catalyses the reaction hexadecanedioyl-CoA + O2 = (2E)-hexadecenedioyl-CoA + H2O2. It carries out the reaction tetracosanoyl-CoA + O2 = (2E)-tetracosenoyl-CoA + H2O2. The catalysed reaction is glutaryl-CoA + O2 = (2E)-glutaconyl-CoA + H2O2. The enzyme catalyses hexanoyl-CoA + O2 = (2E)-hexenoyl-CoA + H2O2. It catalyses the reaction octadecanoyl-CoA + O2 = (2E)-octadecenoyl-CoA + H2O2. It carries out the reaction (5Z,8Z,11Z,14Z,17Z)-eicosapentaenoyl-CoA + O2 = (2E,5Z,8Z,11Z,14Z,17Z)-icosahexaenoyl-CoA + H2O2. The catalysed reaction is (6Z,9Z,12Z,15Z,18Z,21Z)-tetracosahexaenoyl-CoA + O2 = (2E,6Z,9Z,12Z,15Z,18Z,21Z)-tetracosaheptaenoyl-CoA + H2O2. It participates in lipid metabolism; peroxisomal fatty acid beta-oxidation. In terms of biological role, involved in the initial and rate-limiting step of peroxisomal beta-oxidation of straight-chain saturated and unsaturated very-long-chain fatty acids. Catalyzes the desaturation of fatty acyl-CoAs such as palmitoyl-CoA (hexadecanoyl-CoA) to 2-trans-enoyl-CoAs ((2E)-enoyl-CoAs) such as (2E)-hexadecenoyl-CoA, and donates electrons directly to molecular oxygen (O(2)), thereby producing hydrogen peroxide (H(2)O(2)). Shows highest activity against medium-chain fatty acyl-CoAs. Shows optimum activity with a chain length of 10 carbons (decanoyl-CoA) in vitro. Functionally, is active against a much broader range of substrates and shows activity towards long-chain acyl-CoAs. In Pongo abelii (Sumatran orangutan), this protein is Peroxisomal acyl-coenzyme A oxidase 1.